The sequence spans 151 residues: Small ribosomal subunit protein uS15z (151 aa).

The protein belongs to the universal ribosomal protein uS15 family.

This Oryza sativa subsp. japonica (Rice) protein is Small ribosomal subunit protein uS15z.